A 316-amino-acid chain; its full sequence is Glutathione synthetase (316 aa).

Residues 125 to 311 (KLFTAWFPEL…ITGMLMNAIE (187 aa)) enclose the ATP-grasp domain. 151–207 (HQKHGDVIFKPLDGMGGASIFRLKKDDPNVGVIIETLTEHGNRFCMAQNFLPAIKEG) contacts ATP. Residues E281 and N283 each contribute to the Mg(2+) site.

This sequence belongs to the prokaryotic GSH synthase family. Mg(2+) is required as a cofactor. The cofactor is Mn(2+).

The catalysed reaction is gamma-L-glutamyl-L-cysteine + glycine + ATP = glutathione + ADP + phosphate + H(+). It functions in the pathway sulfur metabolism; glutathione biosynthesis; glutathione from L-cysteine and L-glutamate: step 2/2. The polypeptide is Glutathione synthetase (Photorhabdus laumondii subsp. laumondii (strain DSM 15139 / CIP 105565 / TT01) (Photorhabdus luminescens subsp. laumondii)).